The chain runs to 305 residues: Glycine--tRNA ligase alpha subunit (305 aa).

The protein belongs to the class-II aminoacyl-tRNA synthetase family. Tetramer of two alpha and two beta subunits.

It localises to the cytoplasm. The enzyme catalyses tRNA(Gly) + glycine + ATP = glycyl-tRNA(Gly) + AMP + diphosphate. The protein is Glycine--tRNA ligase alpha subunit of Streptococcus pneumoniae (strain Hungary19A-6).